We begin with the raw amino-acid sequence, 356 residues long: Altered inheritance of mitochondria protein 23, mitochondrial (356 aa).

The N-terminal 32 residues, 1–32 (MLKVPLSDVLSQKMLFLKSFRYFHCTKYFSRD), are a transit peptide targeting the mitochondrion.

Belongs to the AIM23 family.

The protein localises to the mitochondrion. This chain is Altered inheritance of mitochondria protein 23, mitochondrial (AIM23), found in Saccharomyces cerevisiae (strain ATCC 204508 / S288c) (Baker's yeast).